The following is a 276-amino-acid chain: Cholesterol 25-hydroxylase-like protein 1, member 2 (276 aa).

N30 carries N-linked (GlcNAc...) asparagine glycosylation. A run of 3 helical transmembrane segments spans residues 39-59 (LFPV…YLSC), 90-110 (GVTL…QWMW), and 126-146 (LVGG…IWHF). The 132-residue stretch at 134–265 (LLLFDLQYFI…FSHWDKMFGT (132 aa)) folds into the Fatty acid hydroxylase domain. The Histidine box-1 signature appears at 144–148 (WHFLH). A Histidine box-2 motif is present at residues 159 to 163 (HAIHH). The N-linked (GlcNAc...) asparagine glycan is linked to N164. 2 helical membrane-spanning segments follow: residues 175 to 195 (CLGG…PVLL) and 199 to 219 (LLTT…DHCG). The short motif at 240–246 (KHDVHHQ) is the Histidine box-3 element.

The protein belongs to the sterol desaturase family. The cofactor is Fe cation.

Its subcellular location is the endoplasmic reticulum membrane. Functionally, may catalyze the formation of 25-hydroxycholesterol from cholesterol. The polypeptide is Cholesterol 25-hydroxylase-like protein 1, member 2 (Danio rerio (Zebrafish)).